A 541-amino-acid polypeptide reads, in one-letter code: Chaperonin GroEL 1 (541 aa).

ATP is bound by residues 29–32 (TIGP), 86–90 (DGTTT), Gly415, 479–481 (NAA), and Asp495.

Belongs to the chaperonin (HSP60) family. As to quaternary structure, forms a cylinder of 14 subunits composed of two heptameric rings stacked back-to-back. Interacts with the co-chaperonin GroES.

It localises to the cytoplasm. The enzyme catalyses ATP + H2O + a folded polypeptide = ADP + phosphate + an unfolded polypeptide.. Functionally, together with its co-chaperonin GroES, plays an essential role in assisting protein folding. The GroEL-GroES system forms a nano-cage that allows encapsulation of the non-native substrate proteins and provides a physical environment optimized to promote and accelerate protein folding. This Streptomyces coelicolor (strain ATCC BAA-471 / A3(2) / M145) protein is Chaperonin GroEL 1.